Here is an 87-residue protein sequence, read N- to C-terminus: Alpha-toxin To2 (87 aa).

A signal peptide spans 1–20 (MIRFVLFISCFFLIGTVVEC). The region spanning 22 to 84 (KDGYLMEGDG…IWDSKNNKCG (63 aa)) is the LCN-type CS-alpha/beta domain. 4 disulfides stabilise this stretch: Cys32–Cys83, Cys36–Cys58, Cys44–Cys64, and Cys48–Cys66. The residue at position 85 (Lys85) is a Lysine amide.

As to expression, expressed by the venom gland.

The protein localises to the secreted. Functionally, alpha toxins bind voltage-independently at site-3 of sodium channels (Nav) and inhibit the inactivation of the activated channels, thereby blocking neuronal transmission. Affects the tetrodotoxin-sensitive sodium current permeability of F-11 rat neuroblastoma cells. Produces a dose dependent increase in amplitude and duration of the current. The polypeptide is Alpha-toxin To2 (Tityus obscurus (Amazonian scorpion)).